The chain runs to 401 residues: Elongation factor Tu, apicoplast (401 aa).

The tr-type G domain maps to 10–206 (KPHINIGTIG…ALDSYIPLPK (197 aa)). The interval 19 to 26 (GHVDHGKT) is G1. GTP is bound at residue 19–26 (GHVDHGKT). Threonine 26 contacts Mg(2+). The interval 60–64 (GITIK) is G2. Residues 81 to 84 (DCPG) are G3. GTP-binding positions include 81 to 85 (DCPGH) and 136 to 139 (NKID). A G4 region spans residues 136 to 139 (NKID). Residues 173 to 175 (SAL) form a G5 region.

The protein belongs to the TRAFAC class translation factor GTPase superfamily. Classic translation factor GTPase family. EF-Tu/EF-1A subfamily. In terms of assembly, monomer.

It localises to the plastid. The protein resides in the apicoplast. It carries out the reaction GTP + H2O = GDP + phosphate + H(+). Functionally, GTP hydrolase that promotes the GTP-dependent binding of aminoacyl-tRNA to the A-site of ribosomes during protein biosynthesis. The protein is Elongation factor Tu, apicoplast (tufA) of Toxoplasma gondii.